A 463-amino-acid chain; its full sequence is Cysteine--tRNA ligase (463 aa).

Residue cysteine 29 participates in Zn(2+) binding. The short motif at 31 to 41 (PTVYDFAHIGN) is the 'HIGH' region element. Zn(2+) is bound by residues cysteine 227, histidine 252, and glutamate 256. A 'KMSKS' region motif is present at residues 285–289 (KMSKS). Lysine 288 is an ATP binding site.

This sequence belongs to the class-I aminoacyl-tRNA synthetase family. In terms of assembly, monomer. Requires Zn(2+) as cofactor.

It localises to the cytoplasm. It carries out the reaction tRNA(Cys) + L-cysteine + ATP = L-cysteinyl-tRNA(Cys) + AMP + diphosphate. The sequence is that of Cysteine--tRNA ligase from Rhodopseudomonas palustris (strain BisA53).